A 141-amino-acid chain; its full sequence is Putative lipoprotein Tanf_09445 (141 aa).

The first 20 residues, 1–20 (MKQKIILWIGALLLLTAGTG), serve as a signal peptide directing secretion. The N-palmitoyl cysteine moiety is linked to residue Cys21. A lipid anchor (S-diacylglycerol cysteine) is attached at Cys21.

It localises to the cell membrane. This chain is Putative lipoprotein Tanf_09445, found in Tannerella forsythia (strain ATCC 43037 / JCM 10827 / CCUG 21028 A / KCTC 5666 / FDC 338) (Bacteroides forsythus).